The primary structure comprises 217 residues: tRNA (guanine-N(7)-)-methyltransferase (217 aa).

Glu-48, Glu-73, Asn-100, and Asp-123 together coordinate S-adenosyl-L-methionine. Asp-123 is a catalytic residue. 2 residues coordinate substrate: Lys-127 and Asp-159.

It belongs to the class I-like SAM-binding methyltransferase superfamily. TrmB family.

The catalysed reaction is guanosine(46) in tRNA + S-adenosyl-L-methionine = N(7)-methylguanosine(46) in tRNA + S-adenosyl-L-homocysteine. The protein operates within tRNA modification; N(7)-methylguanine-tRNA biosynthesis. In terms of biological role, catalyzes the formation of N(7)-methylguanine at position 46 (m7G46) in tRNA. The chain is tRNA (guanine-N(7)-)-methyltransferase from Leptospira interrogans serogroup Icterohaemorrhagiae serovar Lai (strain 56601).